A 302-amino-acid chain; its full sequence is Sulfate adenylyltransferase subunit 2 (302 aa).

Belongs to the PAPS reductase family. CysD subfamily. In terms of assembly, heterodimer composed of CysD, the smaller subunit, and CysN.

It carries out the reaction sulfate + ATP + H(+) = adenosine 5'-phosphosulfate + diphosphate. It participates in sulfur metabolism; hydrogen sulfide biosynthesis; sulfite from sulfate: step 1/3. Functionally, with CysN forms the ATP sulfurylase (ATPS) that catalyzes the adenylation of sulfate producing adenosine 5'-phosphosulfate (APS) and diphosphate, the first enzymatic step in sulfur assimilation pathway. APS synthesis involves the formation of a high-energy phosphoric-sulfuric acid anhydride bond driven by GTP hydrolysis by CysN coupled to ATP hydrolysis by CysD. The sequence is that of Sulfate adenylyltransferase subunit 2 from Serratia proteamaculans (strain 568).